A 209-amino-acid chain; its full sequence is Uridine kinase (209 aa).

12-19 lines the ATP pocket; sequence GGSGGGKT.

It belongs to the uridine kinase family.

It localises to the cytoplasm. It carries out the reaction uridine + ATP = UMP + ADP + H(+). The catalysed reaction is cytidine + ATP = CMP + ADP + H(+). Its pathway is pyrimidine metabolism; CTP biosynthesis via salvage pathway; CTP from cytidine: step 1/3. The protein operates within pyrimidine metabolism; UMP biosynthesis via salvage pathway; UMP from uridine: step 1/1. The chain is Uridine kinase from Streptococcus agalactiae serotype V (strain ATCC BAA-611 / 2603 V/R).